A 338-amino-acid chain; its full sequence is S-adenosylmethionine:tRNA ribosyltransferase-isomerase (338 aa).

Belongs to the QueA family. As to quaternary structure, monomer.

The protein resides in the cytoplasm. The catalysed reaction is 7-aminomethyl-7-carbaguanosine(34) in tRNA + S-adenosyl-L-methionine = epoxyqueuosine(34) in tRNA + adenine + L-methionine + 2 H(+). Its pathway is tRNA modification; tRNA-queuosine biosynthesis. In terms of biological role, transfers and isomerizes the ribose moiety from AdoMet to the 7-aminomethyl group of 7-deazaguanine (preQ1-tRNA) to give epoxyqueuosine (oQ-tRNA). This is S-adenosylmethionine:tRNA ribosyltransferase-isomerase from Francisella tularensis subsp. mediasiatica (strain FSC147).